A 1040-amino-acid polypeptide reads, in one-letter code: Multidrug resistance protein MdtB (1040 aa).

A run of 11 helical transmembrane segments spans residues 15–37, 345–362, 367–389, 396–418, 438–460, 472–494, 535–557, 867–889, 909–931, 968–990, and 1000–1022; these read LFILRPVATTLLMAAILLAGIIG, FELMLAIALVVMIIYLFL, ATIIPGVAVPLSLIGTFAVMVFL, LTLMALTIATGFVVDDAIVVIEN, GEIGFTIISLTFSLIAVLIPLLF, FAVTLAVAILISAVVSLTLTPMM, HPWLTLSVAFATLLLSVMLWITI, VWLIVAAVVAMYIVLGVLYESFI, LIIAGSELDIIAIIGIILLIGIV, ILMTTLAALLGALPLMLSTGVGA, and MVGGLLVSQVLTLFTTPVIYLLF.

The protein belongs to the resistance-nodulation-cell division (RND) (TC 2.A.6) family. MdtB subfamily. As to quaternary structure, part of a tripartite efflux system composed of MdtA, MdtB and MdtC. MdtB forms a heteromultimer with MdtC.

It is found in the cell inner membrane. The polypeptide is Multidrug resistance protein MdtB (Salmonella typhi).